The primary structure comprises 282 residues: MSEISDAEKVRIASDFIKHAPPGEFNEVFNSVRMLLENDDLLKNKCVNAIAQYNVGQFVPVKLDGVAKQTLITPYNDLGNGRFYDEVSKKSFKYDHVRKEAADLQPHPAESGITEQWRQALQTQLDIYIDDHYAKSGTGVVFARNGVFTICIESHQFQPKNFCNGRWRSEWNVPVGDGKSGSQEMKGKILSQVHYYEDGNVQLFSEKEPVLKVNVSADFDKTAKEIIHAISEEETIYQNAVQENYANMSDTTFKALRRQLPVTRAKMDWNKAQTYRIGQEMK.

It belongs to the F-actin-capping protein alpha subunit family. As to quaternary structure, component of the F-actin capping complex, composed of a heterodimer of an alpha and a beta subunit.

Its subcellular location is the cytoplasm. It is found in the cytoskeleton. Its function is as follows. F-actin-capping proteins bind in a Ca(2+)-independent manner to the fast growing ends of actin filaments (barbed end) thereby blocking the exchange of subunits at these ends. Unlike other capping proteins (such as gelsolin and severin), these proteins do not sever actin filaments. In Caenorhabditis elegans, this protein is F-actin-capping protein subunit alpha (cap-1).